Here is a 200-residue protein sequence, read N- to C-terminus: Probable molybdenum cofactor guanylyltransferase (200 aa).

Residues 9–11 (LAG), Lys21, Asp69, and Asp100 contribute to the GTP site. Asp100 provides a ligand contact to Mg(2+).

It belongs to the MobA family. Requires Mg(2+) as cofactor.

Its subcellular location is the cytoplasm. The catalysed reaction is Mo-molybdopterin + GTP + H(+) = Mo-molybdopterin guanine dinucleotide + diphosphate. Transfers a GMP moiety from GTP to Mo-molybdopterin (Mo-MPT) cofactor (Moco or molybdenum cofactor) to form Mo-molybdopterin guanine dinucleotide (Mo-MGD) cofactor. The protein is Probable molybdenum cofactor guanylyltransferase of Bacillus cereus (strain ATCC 10987 / NRS 248).